The following is a 192-amino-acid chain: Holliday junction branch migration complex subunit RuvA (192 aa).

The domain I stretch occupies residues 1–64 (MIGRLTGILA…EDGHYLYGFL (64 aa)). The tract at residues 65–143 (TEAERFAFRQ…DATGVSLHPA (79 aa)) is domain II. Positions 144-149 (VDDSKQ) are flexible linker. The interval 149 to 192 (QDISNALLALGYNEKEAASAMKQLPADVSTSDGIRAALKLLSKV) is domain III.

Belongs to the RuvA family. Homotetramer. Forms an RuvA(8)-RuvB(12)-Holliday junction (HJ) complex. HJ DNA is sandwiched between 2 RuvA tetramers; dsDNA enters through RuvA and exits via RuvB. An RuvB hexamer assembles on each DNA strand where it exits the tetramer. Each RuvB hexamer is contacted by two RuvA subunits (via domain III) on 2 adjacent RuvB subunits; this complex drives branch migration. In the full resolvosome a probable DNA-RuvA(4)-RuvB(12)-RuvC(2) complex forms which resolves the HJ.

Its subcellular location is the cytoplasm. In terms of biological role, the RuvA-RuvB-RuvC complex processes Holliday junction (HJ) DNA during genetic recombination and DNA repair, while the RuvA-RuvB complex plays an important role in the rescue of blocked DNA replication forks via replication fork reversal (RFR). RuvA specifically binds to HJ cruciform DNA, conferring on it an open structure. The RuvB hexamer acts as an ATP-dependent pump, pulling dsDNA into and through the RuvAB complex. HJ branch migration allows RuvC to scan DNA until it finds its consensus sequence, where it cleaves and resolves the cruciform DNA. The protein is Holliday junction branch migration complex subunit RuvA of Dechloromonas aromatica (strain RCB).